Here is a 114-residue protein sequence, read N- to C-terminus: UPF0145 protein SSO1976 (114 aa).

The protein belongs to the UPF0145 family.

The sequence is that of UPF0145 protein SSO1976 from Saccharolobus solfataricus (strain ATCC 35092 / DSM 1617 / JCM 11322 / P2) (Sulfolobus solfataricus).